We begin with the raw amino-acid sequence, 694 residues long: DNA-directed RNA polymerase subunit beta' (694 aa).

4 residues coordinate Zn(2+): C69, C71, C87, and C90. Mg(2+) contacts are provided by D489, D491, and D493.

This sequence belongs to the RNA polymerase beta' chain family. RpoC1 subfamily. In plastids the minimal PEP RNA polymerase catalytic core is composed of four subunits: alpha, beta, beta', and beta''. When a (nuclear-encoded) sigma factor is associated with the core the holoenzyme is formed, which can initiate transcription. The cofactor is Mg(2+). Requires Zn(2+) as cofactor.

Its subcellular location is the plastid. It is found in the chloroplast. It catalyses the reaction RNA(n) + a ribonucleoside 5'-triphosphate = RNA(n+1) + diphosphate. Functionally, DNA-dependent RNA polymerase catalyzes the transcription of DNA into RNA using the four ribonucleoside triphosphates as substrates. The protein is DNA-directed RNA polymerase subunit beta' of Adiantum capillus-veneris (Maidenhair fern).